Reading from the N-terminus, the 519-residue chain is Galactokinase (519 aa).

Residues arginine 47, glutamate 53, histidine 54, and aspartate 56 each contribute to the alpha-D-galactose site. Glycine 159, glycine 161, serine 163, and serine 164 together coordinate ATP. Aspartate 209 serves as a coordination point for alpha-D-galactose. Catalysis depends on aspartate 209, which acts as the Proton acceptor. The ATP site is built by asparagine 257 and lysine 258. Tyrosine 266 serves as a coordination point for alpha-D-galactose.

Belongs to the GHMP kinase family. GalK subfamily.

The catalysed reaction is alpha-D-galactose + ATP = alpha-D-galactose 1-phosphate + ADP + H(+). It participates in carbohydrate metabolism; galactose metabolism. Its function is as follows. Galactokinase is a key enzyme in the galactose metabolism where it catalyzes the conversion of alpha-D-galactose to galactose 1-phosphate. Can also induce the transcription of the gal genes in response to the organism being challenged with galactose as the sole source of carbon. This is Galactokinase (gal1) from Schizosaccharomyces pombe (strain 972 / ATCC 24843) (Fission yeast).